Reading from the N-terminus, the 259-residue chain is Synaptophysin-like protein 1 (259 aa).

At 1–33 (MAPNIYLVRQRISRLGQRMSGFQINLNPLKEPL) the chain is on the cytoplasmic side. The 210-residue stretch at 28–237 (PLKEPLGFIK…NAWFVYKETS (210 aa)) folds into the MARVEL domain. A helical transmembrane segment spans residues 34-54 (GFIKVLEWIASIFAFATCGGF). Over 55–116 (KGQTEIQVNC…LIGDYSSSAQ (62 aa)) the chain is Vesicular. Residue Asn71 is glycosylated (N-linked (GlcNAc...) asparagine). Residues 117–137 (FYVTFAVFVFLYCIAALLLYV) form a helical membrane-spanning segment. Residues 138-150 (GYTSLYLDSRKLP) are Cytoplasmic-facing. A helical transmembrane segment spans residues 151 to 171 (MIDFVVTLVATFLWLVSTSAW). Topologically, residues 172-212 (AKALTDIKIATGHNIIDELPPCKKKAVLCYFGSVTSMGSLN) are vesicular. A glycan (N-linked (GlcNAc...) asparagine) is linked at Asn212. The chain crosses the membrane as a helical span at residues 213–233 (VSVIFGFLNMILWGGNAWFVY). At 234-259 (KETSLHSPSNTSAPHSQGGIPPPTGI) the chain is on the cytoplasmic side.

This sequence belongs to the synaptophysin/synaptobrevin family.

Its subcellular location is the cytoplasmic vesicle membrane. It localises to the melanosome. The sequence is that of Synaptophysin-like protein 1 (SYPL1) from Homo sapiens (Human).